Here is a 256-residue protein sequence, read N- to C-terminus: tRNA (guanine-N(7)-)-methyltransferase (256 aa).

Residues 1–25 (MVATGGQAQDQSQNQEPDVLNPTSA) form a disordered region. Residues Gly79, 102–103 (EI), 137–138 (NA), and Leu157 each bind S-adenosyl-L-methionine. Asp160 is an active-site residue. 235–237 (SEE) is a binding site for S-adenosyl-L-methionine.

This sequence belongs to the class I-like SAM-binding methyltransferase superfamily. TrmB family.

It localises to the nucleus. The enzyme catalyses guanosine(46) in tRNA + S-adenosyl-L-methionine = N(7)-methylguanosine(46) in tRNA + S-adenosyl-L-homocysteine. It functions in the pathway tRNA modification; N(7)-methylguanine-tRNA biosynthesis. Its function is as follows. Catalyzes the formation of N(7)-methylguanine at position 46 (m7G46) in tRNA. The chain is tRNA (guanine-N(7)-)-methyltransferase from Drosophila simulans (Fruit fly).